Reading from the N-terminus, the 395-residue chain is Sensor protein DltS (395 aa).

2 consecutive transmembrane segments (helical) span residues 9-29 and 136-156; these read FVFL…AVSN and FLIL…SLYL. One can recognise a Histidine kinase domain in the interval 177 to 387; that stretch reads DASHELKTPI…RLEVQLPIDG (211 aa). Residue histidine 180 is modified to Phosphohistidine; by autocatalysis.

It is found in the cell membrane. It catalyses the reaction ATP + protein L-histidine = ADP + protein N-phospho-L-histidine.. Its function is as follows. Member of the two-component regulatory system DltS/DltR. Regulates the expression of the dlt operon. Probably phosphorylates DltR. This is Sensor protein DltS (dltS) from Streptococcus agalactiae serotype V (strain ATCC BAA-611 / 2603 V/R).